Here is a 22-residue protein sequence, read N- to C-terminus: 5-methyltetrahydropteroyltriglutamate--homocysteine methyltransferase (22 aa).

It belongs to the vitamin-B12 independent methionine synthase family. It depends on Zn(2+) as a cofactor.

It localises to the cytoplasm. It catalyses the reaction 5-methyltetrahydropteroyltri-L-glutamate + L-homocysteine = tetrahydropteroyltri-L-glutamate + L-methionine. Its pathway is amino-acid biosynthesis; L-methionine biosynthesis via de novo pathway; L-methionine from L-homocysteine (MetE route): step 1/1. Catalyzes the transfer of a methyl group from 5-methyltetrahydrofolate to homocysteine resulting in methionine formation. The protein is 5-methyltetrahydropteroyltriglutamate--homocysteine methyltransferase of Pseudotsuga menziesii (Douglas-fir).